The primary structure comprises 431 residues: Histidinol dehydrogenase (431 aa).

Tyr-130, Gln-191, and Asn-214 together coordinate NAD(+). Substrate-binding residues include Ser-237, Gln-259, and His-262. Zn(2+)-binding residues include Gln-259 and His-262. Residues Glu-327 and His-328 each act as proton acceptor in the active site. Substrate contacts are provided by His-328, Asp-361, Glu-415, and His-420. Asp-361 contributes to the Zn(2+) binding site. His-420 is a Zn(2+) binding site.

It belongs to the histidinol dehydrogenase family. Requires Zn(2+) as cofactor.

The catalysed reaction is L-histidinol + 2 NAD(+) + H2O = L-histidine + 2 NADH + 3 H(+). Its pathway is amino-acid biosynthesis; L-histidine biosynthesis; L-histidine from 5-phospho-alpha-D-ribose 1-diphosphate: step 9/9. Catalyzes the sequential NAD-dependent oxidations of L-histidinol to L-histidinaldehyde and then to L-histidine. In Bradyrhizobium diazoefficiens (strain JCM 10833 / BCRC 13528 / IAM 13628 / NBRC 14792 / USDA 110), this protein is Histidinol dehydrogenase.